A 218-amino-acid chain; its full sequence is Histone chaperone ASF1B (218 aa).

Belongs to the ASF1 family. As to quaternary structure, interacts with histone H3 and histone H4. Interacts strongly with the N-terminus of TOUSLED. Post-translationally, phosphorylated in vitro by TOUSLED.

The protein resides in the nucleus. In terms of biological role, histone chaperone that facilitates histone deposition and histone exchange and removal during nucleosome assembly and disassembly. The polypeptide is Histone chaperone ASF1B (ASF1B) (Arabidopsis thaliana (Mouse-ear cress)).